A 123-amino-acid chain; its full sequence is Small ribosomal subunit protein uS11 (123 aa).

It belongs to the universal ribosomal protein uS11 family. In terms of assembly, part of the 30S ribosomal subunit. Interacts with proteins S7 and S18. Binds to IF-3.

Located on the platform of the 30S subunit, it bridges several disparate RNA helices of the 16S rRNA. Forms part of the Shine-Dalgarno cleft in the 70S ribosome. The protein is Small ribosomal subunit protein uS11 of Coxiella burnetii (strain CbuK_Q154) (Coxiella burnetii (strain Q154)).